We begin with the raw amino-acid sequence, 166 residues long: 2-C-methyl-D-erythritol 2,4-cyclodiphosphate synthase (166 aa).

A divalent metal cation is bound by residues Asp-12 and His-14. Residues 12–14 (DSH) and 38–39 (HS) each bind 4-CDP-2-C-methyl-D-erythritol 2-phosphate. A divalent metal cation is bound at residue His-46. 4-CDP-2-C-methyl-D-erythritol 2-phosphate-binding positions include 60–62 (DIG), 65–69 (FPDTD), and Arg-146.

This sequence belongs to the IspF family. As to quaternary structure, homotrimer. Requires a divalent metal cation as cofactor.

The enzyme catalyses 4-CDP-2-C-methyl-D-erythritol 2-phosphate = 2-C-methyl-D-erythritol 2,4-cyclic diphosphate + CMP. Its pathway is isoprenoid biosynthesis; isopentenyl diphosphate biosynthesis via DXP pathway; isopentenyl diphosphate from 1-deoxy-D-xylulose 5-phosphate: step 4/6. In terms of biological role, involved in the biosynthesis of isopentenyl diphosphate (IPP) and dimethylallyl diphosphate (DMAPP), two major building blocks of isoprenoid compounds. Catalyzes the conversion of 4-diphosphocytidyl-2-C-methyl-D-erythritol 2-phosphate (CDP-ME2P) to 2-C-methyl-D-erythritol 2,4-cyclodiphosphate (ME-CPP) with a corresponding release of cytidine 5-monophosphate (CMP). The sequence is that of 2-C-methyl-D-erythritol 2,4-cyclodiphosphate synthase from Gemmatimonas aurantiaca (strain DSM 14586 / JCM 11422 / NBRC 100505 / T-27).